Reading from the N-terminus, the 113-residue chain is MHEMSIAEGIVQLLEEQAVAQDFTRVRALWLEIGPLAAIEVESLRFCFEAVTRGSLAEGARLEIVELPGRAWCLGCNASVAIRRRYDACPQCGSHRLQVTQGDELRVKELEVE.

Histidine 2 is a binding site for Ni(2+). Zn(2+)-binding residues include cysteine 73, cysteine 76, cysteine 89, and cysteine 92.

It belongs to the HypA/HybF family.

Involved in the maturation of [NiFe] hydrogenases. Required for nickel insertion into the metal center of the hydrogenase. In Azotobacter vinelandii, this protein is Hydrogenase maturation factor HypA.